The sequence spans 263 residues: Peptide methionine sulfoxide reductase A4, chloroplastic (263 aa).

Residues 1-75 constitute a chloroplast transit peptide; that stretch reads MPPLLASTSS…GLGGLGGSPR (75 aa).

This sequence belongs to the MsrA Met sulfoxide reductase family. In terms of tissue distribution, expressed in roots, stems, leaves and flowers.

The protein resides in the plastid. Its subcellular location is the chloroplast. It carries out the reaction L-methionyl-[protein] + [thioredoxin]-disulfide + H2O = L-methionyl-(S)-S-oxide-[protein] + [thioredoxin]-dithiol. The enzyme catalyses [thioredoxin]-disulfide + L-methionine + H2O = L-methionine (S)-S-oxide + [thioredoxin]-dithiol. Catalyzes the reduction of methionine sulfoxide (MetSO) to methionine in proteins. Involved in abiotic and salt stress responses. Plays a protective role against oxidative stress by restoring activity to proteins that have been inactivated by methionine oxidation. MSRA family specifically reduces the MetSO S-enantiomer. The protein is Peptide methionine sulfoxide reductase A4, chloroplastic of Oryza sativa subsp. japonica (Rice).